The sequence spans 471 residues: Ribulose bisphosphate carboxylase large chain (471 aa).

An N6,N6,N6-trimethyllysine modification is found at Lys-5. Substrate contacts are provided by Asn-114 and Thr-164. Lys-166 (proton acceptor) is an active-site residue. Lys-168 contributes to the substrate binding site. Residues Lys-192, Asp-194, and Glu-195 each coordinate Mg(2+). Position 192 is an N6-carboxylysine (Lys-192). Catalysis depends on His-285, which acts as the Proton acceptor. Substrate is bound by residues Arg-286, His-318, and Ser-370.

It belongs to the RuBisCO large chain family. Type I subfamily. As to quaternary structure, heterohexadecamer of 8 large chains and 8 small chains; disulfide-linked. The disulfide link is formed within the large subunit homodimers. Mg(2+) serves as cofactor. In terms of processing, the disulfide bond which can form in the large chain dimeric partners within the hexadecamer appears to be associated with oxidative stress and protein turnover.

The protein localises to the plastid. It localises to the chloroplast. It catalyses the reaction 2 (2R)-3-phosphoglycerate + 2 H(+) = D-ribulose 1,5-bisphosphate + CO2 + H2O. It carries out the reaction D-ribulose 1,5-bisphosphate + O2 = 2-phosphoglycolate + (2R)-3-phosphoglycerate + 2 H(+). In terms of biological role, ruBisCO catalyzes two reactions: the carboxylation of D-ribulose 1,5-bisphosphate, the primary event in carbon dioxide fixation, as well as the oxidative fragmentation of the pentose substrate in the photorespiration process. Both reactions occur simultaneously and in competition at the same active site. The chain is Ribulose bisphosphate carboxylase large chain from Anthocleista grandiflora (Forest fever tree).